The chain runs to 819 residues: NEDD4-binding protein 1 (819 aa).

Over residues 1–13 (MASGSVQSSSGNG) the composition is skewed to polar residues. Residues 1–20 (MASGSVQSSSGNGRRQAAVV) are disordered. Residues 80–164 (KQAVRRAKEY…VQQFIALFKD (85 aa)) form the KH-like domain. A compositionally biased stretch (basic and acidic residues) spans 226–241 (DDKAECKVNQKDEVSR). Disordered stretches follow at residues 226 to 247 (DDKA…AGTP) and 666 to 736 (KLDD…MAPR). Residues 517–669 (LKHIIIDGSN…LGRYGPKLDD (153 aa)) form the RNase NYN domain. Positions 673 to 689 (KQPNNRTVHSSFPSSNE) are enriched in polar residues. Residues 772–819 (RSPSETMQLKEALLKIFPEADQRHKINEILTAHPFMRDLNALSAMVLD) are coCUN.

Belongs to the N4BP1 family.

The protein resides in the cytoplasm. The protein localises to the cytosol. It localises to the nucleus. It is found in the nucleolus. Its subcellular location is the PML body. In terms of biological role, potent suppressor of cytokine production that acts as a regulator of innate immune signaling and inflammation. Acts as a key negative regulator of select cytokine and chemokine responses elicited by TRIF-independent Toll-like receptors (TLRs), thereby limiting inflammatory cytokine responses to minor insults. Has ribonuclease activity. The sequence is that of NEDD4-binding protein 1 from Xenopus tropicalis (Western clawed frog).